We begin with the raw amino-acid sequence, 241 residues long: Viral CASP8 and FADD-like apoptosis regulator (241 aa).

DED domains are found at residues 8–78 (PSLP…SRFG) and 95–175 (RYRK…QLVE). Residues 212–241 (CMPVQESSDSPELLRTPVQESSSDSPEQTT) form a disordered region. The span at 229-241 (VQESSSDSPEQTT) shows a compositional bias: polar residues.

Associates with the death-inducing signaling complex (DISC) formed by TNFRSF6/FAS, FADD and CASP8. Interacts with FADD. Interacts with host TRAF2. Interacts with host NEMO/IKBKG (via N-terminus). Interacts with host SH3BP4; this interaction plays an important in the suppression of host autophagy.

Its subcellular location is the host cytoplasm. The protein resides in the host nucleus. Inhibits TNFRSF1A, TNFRSF6/FAS and TNFRSF12 induced apoptosis. Directs the degradation of host NFKBIB but not NFKBIA. Also suppresses host NF-kappa-B activation by interacting with and preventing ubiquitination of host NEMO/IKBKG, the NF-kappa-B essential modulator subunit of the IKK complex. Interferes with host CASP8/caspase-8 recruitment and activation at the death-inducing signaling complex (DISC). May lead to higher virus production and contribute to virus persistence and oncogenicity. Also participates in the inhibition of host autophagy by interacting with host SH3BP4. The polypeptide is Viral CASP8 and FADD-like apoptosis regulator (Homo sapiens (Human)).